The chain runs to 222 residues: Small ribosomal subunit protein uS3 (222 aa).

A KH type-2 domain is found at 39-108; the sequence is IRRHIKEKLY…TISLDIKEIK (70 aa).

Belongs to the universal ribosomal protein uS3 family. As to quaternary structure, part of the 30S ribosomal subunit. Forms a tight complex with proteins S10 and S14.

In terms of biological role, binds the lower part of the 30S subunit head. Binds mRNA in the 70S ribosome, positioning it for translation. The protein is Small ribosomal subunit protein uS3 of Caldicellulosiruptor bescii (strain ATCC BAA-1888 / DSM 6725 / KCTC 15123 / Z-1320) (Anaerocellum thermophilum).